The primary structure comprises 1071 residues: ATP-dependent helicase/deoxyribonuclease subunit B (1071 aa).

It belongs to the helicase family. AddB/RexB type 2 subfamily. In terms of assembly, heterodimer of AddA and RexB. Mg(2+) serves as cofactor.

Its function is as follows. The heterodimer acts as both an ATP-dependent DNA helicase and an ATP-dependent, dual-direction single-stranded exonuclease. Recognizes the chi site generating a DNA molecule suitable for the initiation of homologous recombination. This subunit has 5' -&gt; 3' nuclease activity but not helicase activity. The polypeptide is ATP-dependent helicase/deoxyribonuclease subunit B (Streptococcus pyogenes serotype M3 (strain ATCC BAA-595 / MGAS315)).